Here is a 62-residue protein sequence, read N- to C-terminus: Large ribosomal subunit protein uL30 (62 aa).

This sequence belongs to the universal ribosomal protein uL30 family. In terms of assembly, part of the 50S ribosomal subunit.

This is Large ribosomal subunit protein uL30 from Prosthecochloris aestuarii (strain DSM 271 / SK 413).